Reading from the N-terminus, the 49-residue chain is Cytochrome b559 subunit beta (49 aa).

A helical transmembrane segment spans residues 24-40; it reads WLAVHVLGVPTVFFLGA. Histidine 28 contributes to the heme binding site.

The protein belongs to the PsbE/PsbF family. As to quaternary structure, heterodimer of an alpha subunit and a beta subunit. PSII is composed of 1 copy each of membrane proteins PsbA, PsbB, PsbC, PsbD, PsbE, PsbF, PsbH, PsbI, PsbJ, PsbK, PsbL, PsbM, PsbT, PsbX, PsbY, Psb30/Ycf12, peripheral proteins PsbO, CyanoQ (PsbQ), PsbU, PsbV and a large number of cofactors. It forms dimeric complexes. It depends on heme b as a cofactor.

Its subcellular location is the cellular thylakoid membrane. This b-type cytochrome is tightly associated with the reaction center of photosystem II (PSII). PSII is a light-driven water:plastoquinone oxidoreductase that uses light energy to abstract electrons from H(2)O, generating O(2) and a proton gradient subsequently used for ATP formation. It consists of a core antenna complex that captures photons, and an electron transfer chain that converts photonic excitation into a charge separation. The protein is Cytochrome b559 subunit beta of Prochlorococcus marinus (strain MIT 9303).